A 120-amino-acid chain; its full sequence is Protein TCL1B4 (120 aa).

It belongs to the TCL1 family.

The polypeptide is Protein TCL1B4 (Tcl1b4) (Mus musculus (Mouse)).